A 957-amino-acid chain; its full sequence is Collagen alpha-1(I) chain (957 aa).

The segment at glycine 1 to proline 957 is disordered. Positions phenylalanine 23–methionine 33 are enriched in low complexity. The segment covering asparagine 45–glutamate 59 has biased composition (basic and acidic residues). Serine 87 carries the post-translational modification Phosphoserine. Low complexity-rich tracts occupy residues aspartate 95 to isoleucine 113 and proline 125 to alanine 138. Residues proline 140 to phenylalanine 152 are compositionally biased toward pro residues. 2 stretches are compositionally biased toward low complexity: residues alanine 186 to serine 210 and serine 219 to proline 228. The segment covering glycine 277–glycine 286 has biased composition (gly residues). Composition is skewed to low complexity over residues lysine 330 to arginine 356, alanine 365 to proline 384, glutamine 426 to glutamine 453, proline 488 to proline 516, alanine 576 to alanine 590, alanine 603 to lysine 618, serine 649 to valine 665, and alanine 707 to alanine 731. Residue serine 579 is modified to Phosphoserine. Pro residues-rich tracts occupy residues proline 772–alanine 782 and alanine 818–valine 833. The span at isoleucine 854–proline 868 shows a compositional bias: low complexity. Residues arginine 869–isoleucine 883 show a composition bias toward basic and acidic residues. The span at proline 902 to proline 935 shows a compositional bias: low complexity. A compositionally biased stretch (pro residues) spans proline 937 to proline 957.

The protein belongs to the fibrillar collagen family. In terms of assembly, trimers of one alpha 2(I) and two alpha 1(I) chains. Prolines at the third position of the tripeptide repeating unit (G-X-Y) are hydroxylated in some or all of the chains. In terms of tissue distribution, forms the fibrils of tendon, ligaments and bones. In bones, the fibrils are mineralized with calcium hydroxyapatite.

Its subcellular location is the secreted. The protein localises to the extracellular space. It is found in the extracellular matrix. In terms of biological role, type I collagen is a member of group I collagen (fibrillar forming collagen). This chain is Collagen alpha-1(I) chain, found in Hippopotamus amphibius (Hippopotamus).